A 249-amino-acid chain; its full sequence is MERLIKLAEQIKDEELRKKVIEFLKNPKATHPGIVDTGISVEEAPASINWHHRYEGGLIEHTISVTKIALKMADVLEEVYGVEVNRDYIIAGALLHDIMKPYNYIRKEDGTFDHYDMFNLDHLTLAVAELYKRDFPIEVIKIVASHHGDHSPTRPNSIEAYIVHYADEADSKINDVAVRVCQARSRDLGISEQEIYKAVNPLKVYEVRSREGKLKTIEFLKDILKSIGIISEDEKKDENNESLENKESN.

The HD domain occupies 58–172 (LIEHTISVTK…VHYADEADSK (115 aa)).

As to quaternary structure, homododecamer. The cofactor is Fe(2+). Zn(2+) is required as a cofactor.

It carries out the reaction 7,8-dihydroneopterin 2',3'-cyclic phosphate + H2O = 7,8-dihydroneopterin 3'-phosphate + H(+). The catalysed reaction is 7,8-dihydroneopterin 2',3'-cyclic phosphate + H2O = 7,8-dihydroneopterin 2'-phosphate + H(+). It participates in cofactor biosynthesis; 5,6,7,8-tetrahydromethanopterin biosynthesis. In terms of biological role, cyclic phosphodiesterase that hydrolyzes the cyclic phosphate of 7,8-dihydroneopterin 2',3'-cyclic phosphate (H2N-cP) and converts it to a mixture of 7,8-dihydroneopterin 2'-phosphate (H2N-2'P) and 7,8-dihydroneopterin 3'-phosphate (H2N-3'P). Is also able to utilize other phosphodiesters as substrates in vitro: hydrolysis of bis-pNPP and pNPPC produces nitrophenyl phosphate, and that of 2',3'-cAMP produces 3'-AMP. ATP, 3',5'-cAMP, GTP, 3',5'-cGMP, and 4',5'-cFMN cannot serve as substrates. The sequence is that of Dihydroneopterin 2',3'-cyclic phosphate phosphodiesterase (mptB) from Methanocaldococcus jannaschii (strain ATCC 43067 / DSM 2661 / JAL-1 / JCM 10045 / NBRC 100440) (Methanococcus jannaschii).